The following is a 210-amino-acid chain: Ribosomal RNA small subunit methyltransferase G (210 aa).

S-adenosyl-L-methionine is bound by residues Gly-77, Phe-82, 100 to 102 (ERS), 128 to 129 (VE), and Arg-141.

It belongs to the methyltransferase superfamily. RNA methyltransferase RsmG family.

The protein localises to the cytoplasm. Functionally, specifically methylates the N7 position of a guanine in 16S rRNA. The sequence is that of Ribosomal RNA small subunit methyltransferase G from Borrelia recurrentis (strain A1).